The following is a 217-amino-acid chain: Ribonuclease HII (217 aa).

Residues W34 to D217 enclose the RNase H type-2 domain. Residues D40, E41, and D131 each contribute to the a divalent metal cation site.

It belongs to the RNase HII family. Mn(2+) serves as cofactor. It depends on Mg(2+) as a cofactor.

The protein resides in the cytoplasm. The catalysed reaction is Endonucleolytic cleavage to 5'-phosphomonoester.. In terms of biological role, endonuclease that specifically degrades the RNA of RNA-DNA hybrids. The protein is Ribonuclease HII of Agrobacterium fabrum (strain C58 / ATCC 33970) (Agrobacterium tumefaciens (strain C58)).